The following is a 257-amino-acid chain: UPF0246 protein swp_3736 (257 aa).

It belongs to the UPF0246 family.

The protein is UPF0246 protein swp_3736 of Shewanella piezotolerans (strain WP3 / JCM 13877).